We begin with the raw amino-acid sequence, 40 residues long: Alpha-conotoxin-like Lp1.6b (40 aa).

The propeptide occupies 1-23; the sequence is VVLGPASDGRNAAANNKASDLIR. Residue Q24 is modified to Pyrrolidone carboxylic acid. Intrachain disulfides connect C26–C32 and C27–C39.

The protein belongs to the conotoxin A superfamily. In terms of tissue distribution, expressed by the venom duct.

The protein localises to the secreted. Its function is as follows. Alpha-conotoxins act on postsynaptic membranes, they bind to the nicotinic acetylcholine receptors (nAChR) and thus inhibit them. This is Alpha-conotoxin-like Lp1.6b from Conus leopardus (Leopard cone).